The sequence spans 373 residues: MSDNSKTRVVVGMSGGVDSSVTALLLKEQGYDVIGIFMKNWDDTDENGVCTATEDYKDVVAVADQIGIPYYSVNFEKEYWDRVFEYFLAEYRAGRTPNPDVMCNKEIKFKAFLDYAMTLGADYVATGHYARVARDEDGTVHMLRGVDNGKDQTYFLSQLSQEQLQKTMFPLGHLEKPEVRKLAEEAGLSTAKKKDSTGICFIGEKNFKNFLSNYLPAQPGRMMTVDGRDMGEHAGLMYYTIGQRGGLGIGGQHGGDNAPWFVVGKDLSKNILYVGQGFYHDSLMSTSLEASQVHFTREMPEEFTLECTAKFRYRQPDSKVTVHVKGDKAEVIFAEPQRAITPGQAVVFYDGEECLGGGLIDNAYRDGQVCQYI.

Residues glycine 12 to serine 19 and methionine 38 contribute to the ATP site. The segment at asparagine 98 to aspartate 100 is interaction with target base in tRNA. Cysteine 103 (nucleophile) is an active-site residue. Cysteine 103 and cysteine 200 are oxidised to a cystine. Residue glycine 127 coordinates ATP. The interaction with tRNA stretch occupies residues lysine 150–glutamine 152. Cysteine 200 (cysteine persulfide intermediate) is an active-site residue. The interval arginine 312–tyrosine 313 is interaction with tRNA.

The protein belongs to the MnmA/TRMU family.

Its subcellular location is the cytoplasm. The enzyme catalyses S-sulfanyl-L-cysteinyl-[protein] + uridine(34) in tRNA + AH2 + ATP = 2-thiouridine(34) in tRNA + L-cysteinyl-[protein] + A + AMP + diphosphate + H(+). Its function is as follows. Catalyzes the 2-thiolation of uridine at the wobble position (U34) of tRNA, leading to the formation of s(2)U34. In Streptococcus pneumoniae (strain P1031), this protein is tRNA-specific 2-thiouridylase MnmA.